Consider the following 229-residue polypeptide: Endonuclease V (229 aa).

Mg(2+)-binding residues include aspartate 43 and aspartate 111.

This sequence belongs to the endonuclease V family. The cofactor is Mg(2+).

The protein localises to the cytoplasm. The catalysed reaction is Endonucleolytic cleavage at apurinic or apyrimidinic sites to products with a 5'-phosphate.. Its function is as follows. DNA repair enzyme involved in the repair of deaminated bases. Selectively cleaves double-stranded DNA at the second phosphodiester bond 3' to a deoxyinosine leaving behind the intact lesion on the nicked DNA. The protein is Endonuclease V of Rippkaea orientalis (strain PCC 8801 / RF-1) (Cyanothece sp. (strain PCC 8801)).